The chain runs to 514 residues: Beta-secretase 2 (514 aa).

The N-terminal stretch at 1 to 20 is a signal peptide; sequence MGALLRALLLPLLAQWLLRA. The propeptide occupies 21-62; the sequence is VPVLAPAPFTLPLQVAGAANHRASTVPGLGTPELPRADGLAL. At 21–469 the chain is on the extracellular side; sequence VPVLAPAPFT…NEPILWIVSY (449 aa). The 338-residue stretch at 88-425 folds into the Peptidase A1 domain; sequence YYLEMLIGTP…DRAQRRVGFA (338 aa). Residue Asp106 is part of the active site. Asn166 carries N-linked (GlcNAc...) asparagine glycosylation. 3 disulfide bridges follow: Cys229/Cys429, Cys288/Cys453, and Cys340/Cys389. Residue Asp299 is part of the active site. Residue Asn362 is glycosylated (N-linked (GlcNAc...) asparagine). The chain crosses the membrane as a helical span at residues 470-490; it reads ALMSVCGAILLVLILLLLFPL. The Cytoplasmic segment spans residues 491-514; the sequence is HCRHAPRDPEVVNDESSLVRHRWK.

It belongs to the peptidase A1 family. In terms of assembly, monomer. Interacts with RTN3 and RTN4. In terms of processing, undergoes autoproteolytic cleavage. Glycosylated.

The protein resides in the cell membrane. It localises to the golgi apparatus. It is found in the endoplasmic reticulum. Its subcellular location is the endosome. The protein localises to the melanosome. It catalyses the reaction Broad endopeptidase specificity. Cleaves Glu-Val-Asn-Leu-|-Asp-Ala-Glu-Phe in the Swedish variant of Alzheimer's amyloid precursor protein.. Its function is as follows. Responsible for the proteolytic processing of the amyloid precursor protein (APP). Cleaves APP, between residues 690 and 691, leading to the generation and extracellular release of beta-cleaved soluble APP, and a corresponding cell-associated C-terminal fragment which is later released by gamma-secretase. It has also been shown that it can cleave APP between residues 671 and 672. Involved in the proteolytic shedding of PMEL at early stages of melanosome biogenesis. Cleaves PMEL within the M-beta fragment to release the amyloidogenic PMEL luminal fragment containing M-alpha and a small portion of M-beta N-terminus. This is a prerequisite step for subsequent processing and assembly of PMEL fibrils into amyloid sheets. Responsible also for the proteolytic processing of CLTRN in pancreatic beta cells. In Rattus norvegicus (Rat), this protein is Beta-secretase 2 (Bace2).